Consider the following 333-residue polypeptide: ADP-L-glycero-D-manno-heptose-6-epimerase (333 aa).

NADP(+) is bound by residues 11–12 (FI), 32–33 (DN), Lys39, Lys54, 76–80 (QGACS), and Asn93. The active-site Proton acceptor is the Tyr140. Lys144 contributes to the NADP(+) binding site. Asn170 serves as a coordination point for substrate. Residues Val171 and Lys179 each contribute to the NADP(+) site. Lys179 acts as the Proton acceptor in catalysis. Residues Arg181, His188, 202 to 205 (FGGW), Arg215, and Tyr294 contribute to the substrate site.

The protein belongs to the NAD(P)-dependent epimerase/dehydratase family. HldD subfamily. Homopentamer. NADP(+) serves as cofactor.

It catalyses the reaction ADP-D-glycero-beta-D-manno-heptose = ADP-L-glycero-beta-D-manno-heptose. Its pathway is nucleotide-sugar biosynthesis; ADP-L-glycero-beta-D-manno-heptose biosynthesis; ADP-L-glycero-beta-D-manno-heptose from D-glycero-beta-D-manno-heptose 7-phosphate: step 4/4. It participates in bacterial outer membrane biogenesis; LPS core biosynthesis. In terms of biological role, catalyzes the interconversion between ADP-D-glycero-beta-D-manno-heptose and ADP-L-glycero-beta-D-manno-heptose via an epimerization at carbon 6 of the heptose. The chain is ADP-L-glycero-D-manno-heptose-6-epimerase from Chromobacterium violaceum (strain ATCC 12472 / DSM 30191 / JCM 1249 / CCUG 213 / NBRC 12614 / NCIMB 9131 / NCTC 9757 / MK).